The following is a 242-amino-acid chain: Sugar fermentation stimulation protein homolog (242 aa).

The protein belongs to the SfsA family.

In Methanosphaera stadtmanae (strain ATCC 43021 / DSM 3091 / JCM 11832 / MCB-3), this protein is Sugar fermentation stimulation protein homolog.